Reading from the N-terminus, the 224-residue chain is Probable molybdenum cofactor guanylyltransferase (224 aa).

GTP is bound by residues 20-22 (LAG), K33, D88, and D117. Residue D117 coordinates Mg(2+).

This sequence belongs to the MobA family. Requires Mg(2+) as cofactor.

It localises to the cytoplasm. The enzyme catalyses Mo-molybdopterin + GTP + H(+) = Mo-molybdopterin guanine dinucleotide + diphosphate. Functionally, transfers a GMP moiety from GTP to Mo-molybdopterin (Mo-MPT) cofactor (Moco or molybdenum cofactor) to form Mo-molybdopterin guanine dinucleotide (Mo-MGD) cofactor. This Methanosarcina mazei (strain ATCC BAA-159 / DSM 3647 / Goe1 / Go1 / JCM 11833 / OCM 88) (Methanosarcina frisia) protein is Probable molybdenum cofactor guanylyltransferase.